We begin with the raw amino-acid sequence, 82 residues long: Small ribosomal subunit protein bS16 (82 aa).

It belongs to the bacterial ribosomal protein bS16 family.

This Cyanothece sp. (strain PCC 7425 / ATCC 29141) protein is Small ribosomal subunit protein bS16.